Reading from the N-terminus, the 287-residue chain is Large ribosomal subunit protein uL2 (287 aa).

The disordered stretch occupies residues 221–287; it reads RGSVMNPCDH…SKRSRGGRDS (67 aa). Over residues 258–287 the composition is skewed to basic residues; it reads KTRKKNKPSNKLVVRRRRRISKRSRGGRDS.

The protein belongs to the universal ribosomal protein uL2 family. As to quaternary structure, part of the 50S ribosomal subunit. Forms a bridge to the 30S subunit in the 70S ribosome.

Its function is as follows. One of the primary rRNA binding proteins. Required for association of the 30S and 50S subunits to form the 70S ribosome, for tRNA binding and peptide bond formation. It has been suggested to have peptidyltransferase activity; this is somewhat controversial. Makes several contacts with the 16S rRNA in the 70S ribosome. The sequence is that of Large ribosomal subunit protein uL2 from Prochlorococcus marinus (strain MIT 9312).